The sequence spans 200 residues: Small ribosomal subunit protein uS4 (200 aa).

Residues 1-43 (MARYTGPRGRRDRRAGVMLSSMRKNPLEKKPYPPGEHGRDRQR) form a disordered region. Residues 25–43 (NPLEKKPYPPGEHGRDRQR) show a composition bias toward basic and acidic residues. The region spanning 92–158 (LRMDNVVYRM…QPIQEAVEQV (67 aa)) is the S4 RNA-binding domain.

Belongs to the universal ribosomal protein uS4 family. In terms of assembly, part of the 30S ribosomal subunit. Contacts protein S5. The interaction surface between S4 and S5 is involved in control of translational fidelity.

Functionally, one of the primary rRNA binding proteins, it binds directly to 16S rRNA where it nucleates assembly of the body of the 30S subunit. Its function is as follows. With S5 and S12 plays an important role in translational accuracy. The chain is Small ribosomal subunit protein uS4 from Rubrobacter xylanophilus (strain DSM 9941 / JCM 11954 / NBRC 16129 / PRD-1).